Here is a 1218-residue protein sequence, read N- to C-terminus: NACHT, LRR and PYD domains-containing protein 1a allele 1 (1218 aa).

The disordered stretch occupies residues 1–61 (MEESQSKQES…SLPGWSSTSN (61 aa)). The segment covering 7–29 (KQESNTRVAQHGSQQDVDPTFQT) has biased composition (polar residues). In terms of domain architecture, NACHT spans 175–484 (QLVIIEGAAG…EFFAAMSYIL (310 aa)). 181 to 188 (GAAGIGKS) is an ATP binding site. LRR repeat units lie at residues 343 to 364 (KERN…LTLC), 673 to 693 (NLEE…RSLC), and 730 to 750 (RLAE…RQLC). A compositionally biased stretch (polar residues) spans 799 to 815 (TMPTENTDGEESLTSSK). The interval 799–842 (TMPTENTDGEESLTSSKQQQQQSGDKHMEPLGTDDDFWGPSGPV) is disordered. The ZU5 stretch occupies residues 835-968 (FWGPSGPVST…HFAVLENPSF (134 aa)). In terms of domain architecture, FIIND spans 835 to 1118 (FWGPSGPVST…LRPALPRMAS (284 aa)). A UPA region spans residues 969-1118 (SPMGVLLRMI…LRPALPRMAS (150 aa)). The CARD domain occupies 1122–1211 (DAPALLHFVD…HLIMDLLEKS (90 aa)).

It belongs to the NLRP family. Interacts (via LRR repeats) with BCL2 and BCL2L1 (via the loop between motifs BH4 and BH3). Interacts with NOD2; this interaction is enhanced in the presence of muramyl dipeptide (MDP) and increases IL1B release. Interacts with EIF2AK2/PKR; this interaction requires EIF2AK2 activity, is accompanied by EIF2AK2 autophosphorylation and promotes inflammasome assembly in response to danger-associated signals. Interacts with MEFV; this interaction targets Nlrp1a to degradation by autophagy, hence preventing excessive IL1B- and IL18-mediated inflammation. Interacts with DPP9; leading to inhibit activation of the inflammasome. DPP9 acts via formation of a ternary complex, composed of a DPP9 homodimer, one full-length NLRP1 protein, and one cleaved C-terminus of Nlrp1a (NACHT, LRR and PYD domains-containing protein 1a, C-terminus). Interacts with DPP8; leading to inhibit activation of the inflammasome, probably via formation of a ternary complex with DPP8. In terms of assembly, interacts with the C-terminal part of Nlrp1a (NACHT, LRR and PYD domains-containing protein 1a, C-terminus) in absence of pathogens and other damage-associated signals. As to quaternary structure, interacts with the N-terminal part of Nlrp1a (NACHT, LRR and PYD domains-containing protein 1a, N-terminus) in absence of pathogens and other damage-associated signals. Homomultimer; forms the Nlrp1a inflammasome polymeric complex, a filament composed of homopolymers of this form in response to pathogens and other damage-associated signals. The Nlrp1a inflammasome polymeric complex directly recruits pro-caspase-1 (proCASP1) independently of PYCARD/ASC. Interacts (via CARD domain) with CASP1 (via CARD domain); leading to CASP1 activation. In terms of processing, autocatalytically cleaved. Autocatalytic cleavage in FIIND region occurs constitutively, prior to activation signals, and is required for inflammasome activity (IL1B release), possibly by facilitating CASP1 binding. Both N- and C-terminal parts remain associated non-covalently. Post-translationally, (Microbial infection) Cleavage by B.anthracis lethal toxin (LT) endopeptidase promotes ubiquitination and degradation of the N-terminal part, releasing the cleaved C-terminal part of the protein (NACHT, LRR and PYD domains-containing protein 1a, C-terminus), which polymerizes and forms the Nlrp1a inflammasome. Ubiquitinated in response to pathogen-associated signals, leading to its degradation by the proteasome and subsequent release of the cleaved C-terminal part of the protein (NACHT, LRR and PYD domains-containing protein 1a, C-terminus), which polymerizes and forms the Nlrp1a inflammasome.

Its subcellular location is the cytoplasm. The protein resides in the cytosol. It is found in the nucleus. The protein localises to the inflammasome. Activated by cleavage by B.anthracis lethal toxin (LT) endopeptidase. Cleavage by LT promotes ubiquitination and degradation of the N-terminal part, releasing the cleaved C-terminal part of the protein (NACHT, LRR and PYD domains-containing protein 1a, C-terminus), which polymerizes and forms the Nlrp1a inflammasome. Nlrp1a inflammasome is inhibited by DPP8 and DPP9, which sequester the C-terminal fragment of Nlrp1a (NACHT, LRR and PYD domains-containing protein 1a, C-terminus) in a ternary complex, thereby preventing Nlrp1a oligomerization and activation. Nlrp1a inflammasome is weakly activated by Val-boroPro (Talabostat, PT-100), an inhibitor of dipeptidyl peptidases DPP8 and DPP9. Val-boroPro relieves inhibition of DPP8 and/or DPP9 by promoting disruption of the ternary complex, releasing its C-terminal part from autoinhibition. Weakly activated by Toxoplasma gondii. Its function is as follows. Acts as the sensor component of the Nlrp1a inflammasome, which mediates inflammasome activation in response to various pathogen-associated signals, leading to subsequent pyroptosis. Inflammasomes are supramolecular complexes that assemble in the cytosol in response to pathogens and other damage-associated signals and play critical roles in innate immunity and inflammation. Acts as a recognition receptor (PRR): recognizes specific pathogens and other damage-associated signals, such as B.anthracis lethal toxin (LT) or Val-boroPro inhibitor, and mediates the formation of the inflammasome polymeric complex. In response to pathogen-associated signals, the N-terminal part of Nlrp1a is degraded by the proteasome, releasing the cleaved C-terminal part of the protein (NACHT, LRR and PYD domains-containing protein 1a, C-terminus), which polymerizes to initiate the formation of the inflammasome complex: the inflammasome directly recruits pro-caspase-1 (proCASP1) independently of PYCARD/ASC and promotes caspase-1 (CASP1) activation, which subsequently cleaves and activates inflammatory cytokines IL1B and IL18 and gasdermin-D (GSDMD), leading to pyroptosis. In the absence of GSDMD expression, the Nlrp1a inflammasome is able to recruit and activate CASP8, leading to activation of gasdermin-E (GSDME). Constitutes the precursor of the Nlrp1a inflammasome, which mediates autoproteolytic processing within the FIIND domain to generate the N-terminal and C-terminal parts, which are associated non-covalently in absence of pathogens and other damage-associated signals. Functionally, regulatory part that prevents formation of the Nlrp1a inflammasome: in absence of pathogens and other damage-associated signals, interacts with the C-terminal part of Nlrp1a (NACHT, LRR and PYD domains-containing protein 1a, C-terminus), preventing activation of the Nlrp1a inflammasome. In response to pathogen-associated signals, this part is ubiquitinated by the N-end rule pathway and degraded by the proteasome, releasing the cleaved C-terminal part of the protein, which polymerizes and forms the Nlrp1a inflammasome. In terms of biological role, constitutes the active part of the Nlrp1a inflammasome. In absence of pathogens and other damage-associated signals, interacts with the N-terminal part of Nlrp1a (NACHT, LRR and PYD domains-containing protein 1a, N-terminus), preventing activation of the Nlrp1a inflammasome. In response to pathogen-associated signals, the N-terminal part of Nlrp1a is degraded by the proteasome, releasing this form, which polymerizes to form the Nlrp1a inflammasome complex: the Nlrp1a inflammasome complex then directly recruits pro-caspase-1 (proCASP1) and promotes caspase-1 (CASP1) activation, leading to gasdermin-D (GSDMD) cleavage and subsequent pyroptosis. The sequence is that of NACHT, LRR and PYD domains-containing protein 1a allele 1 from Rattus norvegicus (Rat).